We begin with the raw amino-acid sequence, 300 residues long: Eukaryotic translation initiation factor 3 subunit F (300 aa).

The MPN domain maps to 33–169 (VKVHPVALFS…VQCYVSALLG (137 aa)).

This sequence belongs to the eIF-3 subunit F family. As to quaternary structure, component of the eukaryotic translation initiation factor 3 (eIF-3) complex.

The protein resides in the cytoplasm. In terms of biological role, component of the eukaryotic translation initiation factor 3 (eIF-3) complex, which is involved in protein synthesis of a specialized repertoire of mRNAs and, together with other initiation factors, stimulates binding of mRNA and methionyl-tRNAi to the 40S ribosome. The eIF-3 complex specifically targets and initiates translation of a subset of mRNAs involved in cell proliferation. This Malassezia globosa (strain ATCC MYA-4612 / CBS 7966) (Dandruff-associated fungus) protein is Eukaryotic translation initiation factor 3 subunit F.